The primary structure comprises 536 residues: C-22 sterol desaturase ERG5A (536 aa).

Residues 41–61 (VWTWVFTLVALCIAYDQIAYI) traverse the membrane as a helical segment. Residue Cys481 participates in heme binding.

It belongs to the cytochrome P450 family. Heme serves as cofactor.

It localises to the endoplasmic reticulum membrane. The enzyme catalyses 5-dehydroepisterol + NADPH + O2 + H(+) = ergosta-5,7,22,24(28)-tetraen-3beta-ol + NADP(+) + 2 H2O. The protein operates within steroid metabolism; ergosterol biosynthesis. Its function is as follows. C-22 sterol desaturase; part of the third module of ergosterol biosynthesis pathway that includes the late steps of the pathway. ERG5A and ERG5B convert 5-dehydroepisterol into ergosta-5,7,22,24(28)-tetraen-3beta-ol by forming the C-22(23) double bond in the sterol side chain. The third module or late pathway involves the ergosterol synthesis itself through consecutive reactions that mainly occur in the endoplasmic reticulum (ER) membrane. Firstly, the squalene synthase ERG9 catalyzes the condensation of 2 farnesyl pyrophosphate moieties to form squalene, which is the precursor of all steroids. Squalene synthase is crucial for balancing the incorporation of farnesyl diphosphate (FPP) into sterol and nonsterol isoprene synthesis. Secondly, squalene is converted into lanosterol by the consecutive action of the squalene epoxidase ERG1 and the lanosterol synthase ERG7. Then, the delta(24)-sterol C-methyltransferase ERG6 methylates lanosterol at C-24 to produce eburicol. Eburicol is the substrate of the sterol 14-alpha demethylase encoded by CYP51A, CYP51B and CYP51C, to yield 4,4,24-trimethyl ergosta-8,14,24(28)-trienol. CYP51B encodes the enzyme primarily responsible for sterol 14-alpha-demethylation, and plays an essential role in ascospore formation. CYP51A encodes an additional sterol 14-alpha-demethylase, induced on ergosterol depletion and responsible for the intrinsic variation in azole sensitivity. The third CYP51 isoform, CYP51C, does not encode a sterol 14-alpha-demethylase, but is required for full virulence on host wheat ears. The C-14 reductase ERG24 then reduces the C14=C15 double bond which leads to 4,4-dimethylfecosterol. A sequence of further demethylations at C-4, involving the C-4 demethylation complex containing the C-4 methylsterol oxidases ERG25, the sterol-4-alpha-carboxylate 3-dehydrogenase ERG26 and the 3-keto-steroid reductase ERG27, leads to the production of fecosterol via 4-methylfecosterol. ERG28 has a role as a scaffold to help anchor ERG25, ERG26 and ERG27 to the endoplasmic reticulum. The C-8 sterol isomerase ERG2 then catalyzes the reaction which results in unsaturation at C-7 in the B ring of sterols and thus converts fecosterol to episterol. The sterol-C5-desaturases ERG3A and ERG3BB then catalyze the introduction of a C-5 double bond in the B ring to produce 5-dehydroepisterol. The C-22 sterol desaturases ERG5A and ERG5B further convert 5-dehydroepisterol into ergosta-5,7,22,24(28)-tetraen-3beta-ol by forming the C-22(23) double bond in the sterol side chain. Finally, ergosta-5,7,22,24(28)-tetraen-3beta-ol is substrate of the C-24(28) sterol reductase ERG4 to produce ergosterol. The chain is C-22 sterol desaturase ERG5A from Gibberella zeae (strain ATCC MYA-4620 / CBS 123657 / FGSC 9075 / NRRL 31084 / PH-1) (Wheat head blight fungus).